We begin with the raw amino-acid sequence, 1417 residues long: MNNGILHQNYNSKKFDIIKISLASPEVIRSWSHGEVKKPETINYRTFKPERDGLFCAKIFGPIKDYECLCGKYKRLKHRGVVCERCGVEVEQAKVRRERMGHIDLVCPVVHIWYLKSLPSRIGLFLDMPLKNVEKVLYFESYIVTDPGMTPLEKKQLLTDEEYAEALENYGYEFEASMGAEAIRDLLADTDIESEIELLQAEYEESKSTAKKEKAIKRLRLLETFQASGNKPEWMVMTVLPVLPPDLRPLVPIEGGRFATSDLNDLYRRVINRNNRLKKLLDLNAPDIIVRNEKRMLQEAVDALLDNGRRGRAVTGSNKRPLKSLADMIKGKQGRFRQNLLGKRVDYSGRSVITVGPSLRLHECGLPKKMALELFKPFVYSKLRLGGHATTIKQAKRMVELEEAVVWDILETVINEHPVLLNRAPTLHRLGIQAFEPRLIEGKAIQLHPLVCAAFNADFDGDQMAVHVPLTVESQLEARVLMMSTNNILSPASGQPIITPTQDIVLGLYYITREKEGARGEGKLFSSYEDVSRAYNSGTIDIHAKIKLRIDRQVFDTKGNTYNEKGVVNTTVGRALLLNILPEGLSFSLLNKVLVKKEISKIINQAFRVLGGKATVVLADKLMYAGFKYSTLSGVSVGVDDMTIPDNKEAKIEEAEKEIKQITEQYQSSLITENERYNNIINIWSKTSDEVGASMMDAISKDTVSINGEKKEIESFNSVYMMAKSGARGSYNQMRQLAGMRGLMAKPDGTMIETAITANFREGLSVLQYFTSTHGARKGLADTALKTANAGYLTRRLVDVAQDLVVIEEDCGTDDGLMFSAIVEDGEVKVPLVERALGRTLAADVVTEKGVVLLEAGTLLDENLVELLDDNGIDMIKVRSPITCKTRRGLCAKCYGRDLARERQVNVGESVGVIAAQSIGEPGTQLTMRTFHTGGAASLGITVSDIKVKTAGKIKFKNIRTVTNKEGQEIVISRAGEIIVSDTMGRVREQHKIPMGAVVPLASGKAVEIGDVIATWDPHAQPLITDVAGKVVLEDVIDGITSKHTYDDLTGQQTIEITSISQRTTSKNLKPVVKIVDEKGAELKSIPLAVGAVLNVADDSILEVGDIVAKIPLEGSKNKDITGGLPRVAELFEARRPKDAAILSPCDGMVRLGNRDTKEKQRIEIIDKNGHIVEEILLPKSRHLVVFDGEQVSRGDVLADGPTDPHDLLKYKGLEEFADYILIEAQSVYRMQGVVINDKHIETIVRQMLRKAVILDEGDSKFVKDESIELVRILEENDKLRKQGKKEVEYELVLMGITRSSLSTESFLSAASFQETTRVLTEASINSQIDNLRGLKENVLIGRLIPTGTGLAVRKESAKIEKMREELGVEDNMVFTDLSSFNPEEISFDSIQSQKEDKDINEDIEESLRNALESLDF.

The Zn(2+) site is built by cysteine 68, cysteine 70, cysteine 83, and cysteine 86. Positions 458, 460, and 462 each coordinate Mg(2+). The Zn(2+) site is built by cysteine 811, cysteine 884, cysteine 891, and cysteine 894.

The protein belongs to the RNA polymerase beta' chain family. In terms of assembly, the RNAP catalytic core consists of 2 alpha, 1 beta, 1 beta' and 1 omega subunit. When a sigma factor is associated with the core the holoenzyme is formed, which can initiate transcription. Mg(2+) serves as cofactor. The cofactor is Zn(2+).

It catalyses the reaction RNA(n) + a ribonucleoside 5'-triphosphate = RNA(n+1) + diphosphate. Functionally, DNA-dependent RNA polymerase catalyzes the transcription of DNA into RNA using the four ribonucleoside triphosphates as substrates. This is DNA-directed RNA polymerase subunit beta' from Francisella tularensis subsp. novicida (strain U112).